The following is a 546-amino-acid chain: Chaperonin GroEL 1 (546 aa).

Residues 30-33 (TLGP), K51, 87-91 (DGTTT), G415, 479-481 (NAA), and D495 contribute to the ATP site. The interval 526 to 546 (KEDAPMPGGMPGGMGGMGMDM) is disordered. Positions 534-546 (GMPGGMGGMGMDM) are enriched in gly residues.

Belongs to the chaperonin (HSP60) family. In terms of assembly, forms a cylinder of 14 subunits composed of two heptameric rings stacked back-to-back. Interacts with the co-chaperonin GroES.

It localises to the cytoplasm. It catalyses the reaction ATP + H2O + a folded polypeptide = ADP + phosphate + an unfolded polypeptide.. In terms of biological role, together with its co-chaperonin GroES, plays an essential role in assisting protein folding. The GroEL-GroES system forms a nano-cage that allows encapsulation of the non-native substrate proteins and provides a physical environment optimized to promote and accelerate protein folding. In Burkholderia vietnamiensis (strain G4 / LMG 22486) (Burkholderia cepacia (strain R1808)), this protein is Chaperonin GroEL 1.